Reading from the N-terminus, the 543-residue chain is Putative pectinesterase/pectinesterase inhibitor 22 (543 aa).

A signal peptide spans 1-19; that stretch reads MGITTALLLVMLMSVHTSS. The pectinesterase inhibitor 22 stretch occupies residues 38–197; that stretch reads AKACQFIDAH…TQLVSNVLDM (160 aa). 2 N-linked (GlcNAc...) asparagine glycosylation sites follow: asparagine 211 and asparagine 263. Residues 240 to 527 are pectinesterase 22; it reads NTVVAIDGKG…FTVGSFIDGR (288 aa). Substrate is bound by residues threonine 315 and glutamine 345. Aspartate 368 functions as the Proton donor; for pectinesterase activity in the catalytic mechanism. The cysteines at positions 382 and 402 are disulfide-linked. Aspartate 389 acts as the Nucleophile; for pectinesterase activity in catalysis. Arginine 448 and tryptophan 450 together coordinate substrate.

The protein in the N-terminal section; belongs to the PMEI family. In the C-terminal section; belongs to the pectinesterase family.

It is found in the secreted. The protein localises to the cell wall. It carries out the reaction [(1-&gt;4)-alpha-D-galacturonosyl methyl ester](n) + n H2O = [(1-&gt;4)-alpha-D-galacturonosyl](n) + n methanol + n H(+). The protein operates within glycan metabolism; pectin degradation; 2-dehydro-3-deoxy-D-gluconate from pectin: step 1/5. In terms of biological role, acts in the modification of cell walls via demethylesterification of cell wall pectin. The polypeptide is Putative pectinesterase/pectinesterase inhibitor 22 (PME22) (Arabidopsis thaliana (Mouse-ear cress)).